Here is a 34-residue protein sequence, read N- to C-terminus: Thermomycolin (34 aa).

Ser-33 (charge relay system) is an active-site residue.

This sequence belongs to the peptidase S8 family.

It is found in the secreted. It carries out the reaction Rather non-specific hydrolysis of proteins. Preferential cleavage: -Ala-|-Xaa-, -Tyr-|-Xaa-, -Phe-|-Xaa- in small molecular substrates.. In terms of biological role, this is an extracellular proteinase with a general specificity for apolar residues. The protein is Thermomycolin of Malbranchea cinnamomea (Thermophilic fungus).